The sequence spans 334 residues: Probable tRNA pseudouridine synthase B (334 aa).

The active-site Nucleophile is the D82. The 76-residue stretch at 250–325 (LPKIWIKDSA…IAVDVEKVFM (76 aa)) folds into the PUA domain.

Belongs to the pseudouridine synthase TruB family. Type 2 subfamily.

The enzyme catalyses uridine(55) in tRNA = pseudouridine(55) in tRNA. In terms of biological role, could be responsible for synthesis of pseudouridine from uracil-55 in the psi GC loop of transfer RNAs. This is Probable tRNA pseudouridine synthase B from Pyrococcus abyssi (strain GE5 / Orsay).